The chain runs to 318 residues: Chlorophyllase-2 (318 aa).

The GXSXG signature appears at 136 to 140 (GHSRG). Ser-138 acts as the Nucleophile in catalysis. Active-site charge relay system residues include Asp-167 and His-244.

It belongs to the AB hydrolase superfamily. Lipase family. Expressed in leaves, flowers and flower buds, but not in roots.

The protein resides in the cytoplasm. Its subcellular location is the cytosol. The catalysed reaction is a chlorophyll + H2O = a chlorophyllide + phytol + H(+). It catalyses the reaction chlorophyll a + H2O = phytol + chlorophyllide a + H(+). Its pathway is porphyrin-containing compound metabolism; chlorophyll degradation. Its function is as follows. Catalyzes the hydrolysis of ester bond in chlorophyll to yield chlorophyllide and phytol. Does not seem to be required for chlorophyll degradation during senescence. This Arabidopsis thaliana (Mouse-ear cress) protein is Chlorophyllase-2.